Reading from the N-terminus, the 68-residue chain is DNA-directed RNA polymerase subunit omega (68 aa).

The protein belongs to the RNA polymerase subunit omega family. As to quaternary structure, the RNAP catalytic core consists of 2 alpha, 1 beta, 1 beta' and 1 omega subunit. When a sigma factor is associated with the core the holoenzyme is formed, which can initiate transcription.

The catalysed reaction is RNA(n) + a ribonucleoside 5'-triphosphate = RNA(n+1) + diphosphate. Its function is as follows. Promotes RNA polymerase assembly. Latches the N- and C-terminal regions of the beta' subunit thereby facilitating its interaction with the beta and alpha subunits. This is DNA-directed RNA polymerase subunit omega from Desulforapulum autotrophicum (strain ATCC 43914 / DSM 3382 / VKM B-1955 / HRM2) (Desulfobacterium autotrophicum).